The sequence spans 345 residues: Probable deoxyhypusine synthase 2 (345 aa).

The Nucleophile role is filled by Lys-292.

The protein belongs to the deoxyhypusine synthase family. NAD(+) serves as cofactor.

The enzyme catalyses [eIF5A protein]-L-lysine + spermidine = [eIF5A protein]-deoxyhypusine + propane-1,3-diamine. The protein operates within protein modification; eIF5A hypusination. Functionally, catalyzes the NAD-dependent oxidative cleavage of spermidine and the subsequent transfer of the butylamine moiety of spermidine to the epsilon-amino group of a specific lysine residue of the eIF-5A precursor protein to form the intermediate deoxyhypusine residue. In Methanosarcina mazei (strain ATCC BAA-159 / DSM 3647 / Goe1 / Go1 / JCM 11833 / OCM 88) (Methanosarcina frisia), this protein is Probable deoxyhypusine synthase 2 (dys2).